Reading from the N-terminus, the 907-residue chain is Protein translocase subunit SecA (907 aa).

ATP contacts are provided by residues Q87, 105–109 (GEGKT), and D512. The Zn(2+) site is built by C891, C893, C902, and H903.

This sequence belongs to the SecA family. As to quaternary structure, monomer and homodimer. Part of the essential Sec protein translocation apparatus which comprises SecA, SecYEG and auxiliary proteins SecDF-YajC and YidC. Zn(2+) is required as a cofactor.

The protein localises to the cell inner membrane. Its subcellular location is the cytoplasm. The enzyme catalyses ATP + H2O + cellular proteinSide 1 = ADP + phosphate + cellular proteinSide 2.. Its function is as follows. Part of the Sec protein translocase complex. Interacts with the SecYEG preprotein conducting channel. Has a central role in coupling the hydrolysis of ATP to the transfer of proteins into and across the cell membrane, serving both as a receptor for the preprotein-SecB complex and as an ATP-driven molecular motor driving the stepwise translocation of polypeptide chains across the membrane. In Tolumonas auensis (strain DSM 9187 / NBRC 110442 / TA 4), this protein is Protein translocase subunit SecA.